Here is a 159-residue protein sequence, read N- to C-terminus: Large ribosomal subunit protein bL17 (159 aa).

Positions 119-138 (PVTPKAKPAKSTAKAAPKSK) are enriched in low complexity. The interval 119–159 (PVTPKAKPAKSTAKAAPKSKAPVEETPDEPASEETAEAEAD) is disordered. Over residues 143–159 (ETPDEPASEETAEAEAD) the composition is skewed to acidic residues.

Belongs to the bacterial ribosomal protein bL17 family. As to quaternary structure, part of the 50S ribosomal subunit. Contacts protein L32.

In Leifsonia xyli subsp. xyli (strain CTCB07), this protein is Large ribosomal subunit protein bL17.